A 397-amino-acid chain; its full sequence is Protochlorophyllide reductase, chloroplastic (397 aa).

A chloroplast-targeting transit peptide spans 1–57 (MALTMSAKSVSARAQVSSKAQAAPAVAVSGRTSSRVMPAPALAARSSVARTPLVVCA).

The protein belongs to the short-chain dehydrogenases/reductases (SDR) family. POR subfamily.

It is found in the plastid. The protein resides in the chloroplast. It carries out the reaction chlorophyllide a + NADP(+) = protochlorophyllide a + NADPH + H(+). It participates in porphyrin-containing compound metabolism; chlorophyll biosynthesis. Its function is as follows. Phototransformation of protochlorophyllide (Pchlide) to chlorophyllide (Chlide). This is Protochlorophyllide reductase, chloroplastic (PORA) from Chlamydomonas reinhardtii (Chlamydomonas smithii).